Reading from the N-terminus, the 1410-residue chain is ABC transporter C family member 13 (1410 aa).

8 consecutive transmembrane segments (helical) span residues 23–43, 60–80, 88–108, 122–142, 148–168, 391–411, 474–494, and 505–525; these read IVLG…LTIT, LLYV…VLLV, VILC…ILSL, ILCF…NMIF, QEIC…VLRI, LSGL…SVLI, VFFW…LFAL, and FTCL…PWVI. In terms of domain architecture, ABC transmembrane type-1 1 spans 255–530; the sequence is CNNYSTPSLI…FPWVINGLID (276 aa). One can recognise an ABC transporter 1 domain in the interval 564-791; the sequence is VCVEDASCTW…ISPTFSLTNE (228 aa). Residue 602 to 609 coordinates ATP; sequence GEVGSGKT. A run of 6 helical transmembrane segments spans residues 844–864, 889–909, 963–985, 990–1009, 1087–1107, and 1111–1131; these read AVFS…LMQG, TSFY…LTLV, SLPF…IVVL, VLFL…LQVF, IVLF…PISF, and GLVG…GSLL. The region spanning 852–1139 is the ABC transmembrane type-1 2 domain; that stretch reads TIVILVSAVL…LLTSFTETEK (288 aa). Positions 1174 to 1407 constitute an ABC transporter 2 domain; the sequence is VEFHNVTMRY…DSSTFSSFVR (234 aa). 1208–1215 is a binding site for ATP; the sequence is GRTGAGKS.

Belongs to the ABC transporter superfamily. ABCC family. Conjugate transporter (TC 3.A.1.208) subfamily. As to expression, ubiquitous.

It is found in the membrane. It carries out the reaction ATP + H2O + xenobioticSide 1 = ADP + phosphate + xenobioticSide 2.. In terms of biological role, pump for glutathione S-conjugates. The protein is ABC transporter C family member 13 (ABCC13) of Arabidopsis thaliana (Mouse-ear cress).